We begin with the raw amino-acid sequence, 390 residues long: Queuine tRNA-ribosyltransferase (390 aa).

Asp92 acts as the Proton acceptor in catalysis. Residues 92–96 (DSGGF), Asp146, Gln195, and Gly222 contribute to the substrate site. Residues 253–259 (GVGTPED) are RNA binding. Residue Asp272 is the Nucleophile of the active site. Residues 277 to 281 (TRNAR) are RNA binding; important for wobble base 34 recognition. Cys310, Cys312, Cys315, and His354 together coordinate Zn(2+).

Belongs to the queuine tRNA-ribosyltransferase family. As to quaternary structure, homodimer. Within each dimer, one monomer is responsible for RNA recognition and catalysis, while the other monomer binds to the replacement base PreQ1. The cofactor is Zn(2+).

The catalysed reaction is 7-aminomethyl-7-carbaguanine + guanosine(34) in tRNA = 7-aminomethyl-7-carbaguanosine(34) in tRNA + guanine. Its pathway is tRNA modification; tRNA-queuosine biosynthesis. Functionally, catalyzes the base-exchange of a guanine (G) residue with the queuine precursor 7-aminomethyl-7-deazaguanine (PreQ1) at position 34 (anticodon wobble position) in tRNAs with GU(N) anticodons (tRNA-Asp, -Asn, -His and -Tyr). Catalysis occurs through a double-displacement mechanism. The nucleophile active site attacks the C1' of nucleotide 34 to detach the guanine base from the RNA, forming a covalent enzyme-RNA intermediate. The proton acceptor active site deprotonates the incoming PreQ1, allowing a nucleophilic attack on the C1' of the ribose to form the product. After dissociation, two additional enzymatic reactions on the tRNA convert PreQ1 to queuine (Q), resulting in the hypermodified nucleoside queuosine (7-(((4,5-cis-dihydroxy-2-cyclopenten-1-yl)amino)methyl)-7-deazaguanosine). This Delftia acidovorans (strain DSM 14801 / SPH-1) protein is Queuine tRNA-ribosyltransferase.